The following is a 149-amino-acid chain: Inner membrane protein YidI (149 aa).

Residues methionine 1–lysine 8 lie on the Cytoplasmic side of the membrane. A helical membrane pass occupies residues isoleucine 9–glycine 31. The Periplasmic segment spans residues proline 32–lysine 77. A helical transmembrane segment spans residues isoleucine 78–glycine 97. Residues glycine 98–threonine 117 lie on the Cytoplasmic side of the membrane. The helical transmembrane segment at leucine 118–phenylalanine 140 threads the bilayer. The Periplasmic segment spans residues serine 141 to valine 149.

The protein resides in the cell inner membrane. This is Inner membrane protein YidI (yidI) from Escherichia coli (strain K12).